Reading from the N-terminus, the 761-residue chain is Xaa-Pro dipeptidyl-peptidase (761 aa).

Active-site charge relay system residues include serine 349, aspartate 469, and histidine 499.

This sequence belongs to the peptidase S15 family. As to quaternary structure, homodimer.

The protein localises to the cytoplasm. The enzyme catalyses Hydrolyzes Xaa-Pro-|- bonds to release unblocked, N-terminal dipeptides from substrates including Ala-Pro-|-p-nitroanilide and (sequentially) Tyr-Pro-|-Phe-Pro-|-Gly-Pro-|-Ile.. Functionally, removes N-terminal dipeptides sequentially from polypeptides having unsubstituted N-termini provided that the penultimate residue is proline. This is Xaa-Pro dipeptidyl-peptidase from Streptococcus equi subsp. zooepidemicus (strain H70).